A 416-amino-acid chain; its full sequence is Serine hydroxymethyltransferase (416 aa).

(6S)-5,6,7,8-tetrahydrofolate is bound by residues leucine 121 and 125 to 127; that span reads GHL. The residue at position 230 (lysine 230) is an N6-(pyridoxal phosphate)lysine.

The protein belongs to the SHMT family. In terms of assembly, homodimer. The cofactor is pyridoxal 5'-phosphate.

It localises to the cytoplasm. It catalyses the reaction (6R)-5,10-methylene-5,6,7,8-tetrahydrofolate + glycine + H2O = (6S)-5,6,7,8-tetrahydrofolate + L-serine. The protein operates within one-carbon metabolism; tetrahydrofolate interconversion. It participates in amino-acid biosynthesis; glycine biosynthesis; glycine from L-serine: step 1/1. Its function is as follows. Catalyzes the reversible interconversion of serine and glycine with tetrahydrofolate (THF) serving as the one-carbon carrier. This reaction serves as the major source of one-carbon groups required for the biosynthesis of purines, thymidylate, methionine, and other important biomolecules. Also exhibits THF-independent aldolase activity toward beta-hydroxyamino acids, producing glycine and aldehydes, via a retro-aldol mechanism. This is Serine hydroxymethyltransferase from Nitrosomonas eutropha (strain DSM 101675 / C91 / Nm57).